A 113-amino-acid polypeptide reads, in one-letter code: Large ribosomal subunit protein P2 (113 aa).

The tract at residues 60 to 113 (SKVSSLSAGAGPSGGAAAAGADAGAAEAEKEEEPQEEEADVNMGDIFGGDDEDY) is disordered. The segment covering 74 to 85 (GAAAAGADAGAA) has biased composition (low complexity). Residues 88–99 (EKEEEPQEEEAD) are compositionally biased toward acidic residues.

It belongs to the eukaryotic ribosomal protein P1/P2 family. As to quaternary structure, P1 and P2 exist as dimers at the large ribosomal subunit. Phosphorylated.

In terms of biological role, plays an important role in the elongation step of protein synthesis. The protein is Large ribosomal subunit protein P2 of Euplotes raikovi.